A 58-amino-acid chain; its full sequence is Sec-independent protein translocase protein TatA (58 aa).

The helical transmembrane segment at 1–21 (MLSNIGFPGLILILVAILILF) threads the bilayer.

Belongs to the TatA/E family. Forms a complex with TatC.

Its subcellular location is the cell membrane. Functionally, part of the twin-arginine translocation (Tat) system that transports large folded proteins containing a characteristic twin-arginine motif in their signal peptide across membranes. TatA could form the protein-conducting channel of the Tat system. The chain is Sec-independent protein translocase protein TatA from Bacillus cytotoxicus (strain DSM 22905 / CIP 110041 / 391-98 / NVH 391-98).